Here is a 194-residue protein sequence, read N- to C-terminus: Der GTPase-activating protein YihI (194 aa).

Residues 1 to 81 (MSRSKKTRRI…AKVKKDPRVG (81 aa)) form a disordered region. Composition is skewed to basic and acidic residues over residues 9-23 (RISDIMPARKADKKP) and 36-47 (TRYELDVQAREE). Residues 59–70 (GSRNVITEQKTA) are compositionally biased toward polar residues.

The protein belongs to the YihI family. As to quaternary structure, interacts with Der.

In terms of biological role, a GTPase-activating protein (GAP) that modifies Der/EngA GTPase function. May play a role in ribosome biogenesis. The polypeptide is Der GTPase-activating protein YihI (Haemophilus ducreyi (strain 35000HP / ATCC 700724)).